The following is a 607-amino-acid chain: Elongation factor 4 (607 aa).

Positions 11–193 (SKIRNFSIIA…QIVEKVPAPA (183 aa)) constitute a tr-type G domain. GTP is bound by residues 23–28 (DHGKST) and 140–143 (NKID).

It belongs to the TRAFAC class translation factor GTPase superfamily. Classic translation factor GTPase family. LepA subfamily.

The protein localises to the cell membrane. It catalyses the reaction GTP + H2O = GDP + phosphate + H(+). Its function is as follows. Required for accurate and efficient protein synthesis under certain stress conditions. May act as a fidelity factor of the translation reaction, by catalyzing a one-codon backward translocation of tRNAs on improperly translocated ribosomes. Back-translocation proceeds from a post-translocation (POST) complex to a pre-translocation (PRE) complex, thus giving elongation factor G a second chance to translocate the tRNAs correctly. Binds to ribosomes in a GTP-dependent manner. This chain is Elongation factor 4, found in Bacillus cereus (strain ATCC 14579 / DSM 31 / CCUG 7414 / JCM 2152 / NBRC 15305 / NCIMB 9373 / NCTC 2599 / NRRL B-3711).